The chain runs to 61 residues: Putative antitoxin RelB2 (61 aa).

Antitoxin component of a type II toxin-antitoxin (TA) system. Its cognate toxin is RelE2 (Potential). This Methanocaldococcus jannaschii (strain ATCC 43067 / DSM 2661 / JAL-1 / JCM 10045 / NBRC 100440) (Methanococcus jannaschii) protein is Putative antitoxin RelB2 (relB2).